We begin with the raw amino-acid sequence, 151 residues long: Transcriptional repressor NrdR (151 aa).

Residues 3–34 (CPFCSSDNTRVIDSRPADDNSSIRRRRLCDDC) fold into a zinc finger. Residues 49–139 (LIVIKKDNNR…VYREFKDVNT (91 aa)) enclose the ATP-cone domain.

This sequence belongs to the NrdR family. Zn(2+) is required as a cofactor.

Negatively regulates transcription of bacterial ribonucleotide reductase nrd genes and operons by binding to NrdR-boxes. This Agathobacter rectalis (strain ATCC 33656 / DSM 3377 / JCM 17463 / KCTC 5835 / VPI 0990) (Eubacterium rectale) protein is Transcriptional repressor NrdR.